Reading from the N-terminus, the 175-residue chain is ATP synthase subunit b 2 (175 aa).

A helical membrane pass occupies residues 20–40 (LIFWTAVTFVIVLLILKKFAW).

This sequence belongs to the ATPase B chain family. As to quaternary structure, F-type ATPases have 2 components, F(1) - the catalytic core - and F(0) - the membrane proton channel. F(1) has five subunits: alpha(3), beta(3), gamma(1), delta(1), epsilon(1). F(0) has four main subunits: a(1), b(2) and c(10-14). The alpha and beta chains form an alternating ring which encloses part of the gamma chain. F(1) is attached to F(0) by a central stalk formed by the gamma and epsilon chains, while a peripheral stalk is formed by the delta and b chains.

The protein resides in the cell inner membrane. Its function is as follows. F(1)F(0) ATP synthase produces ATP from ADP in the presence of a proton or sodium gradient. F-type ATPases consist of two structural domains, F(1) containing the extramembraneous catalytic core and F(0) containing the membrane proton channel, linked together by a central stalk and a peripheral stalk. During catalysis, ATP synthesis in the catalytic domain of F(1) is coupled via a rotary mechanism of the central stalk subunits to proton translocation. Component of the F(0) channel, it forms part of the peripheral stalk, linking F(1) to F(0). The protein is ATP synthase subunit b 2 of Prosthecochloris aestuarii (strain DSM 271 / SK 413).